The sequence spans 1694 residues: Protein TOPAZ1 (1694 aa).

4 disordered regions span residues 1-135 (MRRP…PGLD), 322-341 (EESS…EKAD), 600-629 (ELSR…TGNK), and 891-920 (ISQE…EPSD). Residues 31–40 (GAAGGCGPEA) show a composition bias toward gly residues. Residues 95–116 (SDPRGLEAAKEAELPLQTERHT) show a composition bias toward basic and acidic residues. Over residues 603-627 (RSGSEVISNTTEDTQLTSETQSLTG) the composition is skewed to polar residues. The segment covering 903–920 (QSTDSKYMETPVKKEPSD) has biased composition (basic and acidic residues).

The protein resides in the cytoplasm. It is found in the cytosol. Its function is as follows. Important for normal spermatogenesis and male fertility. Specifically required for progression to the post-meiotic stages of spermatocyte development. Seems to be necessary for normal expression levels of a number of testis-expressed gene transcripts, although its role in this process is unclear. The chain is Protein TOPAZ1 (TOPAZ1) from Gorilla gorilla gorilla (Western lowland gorilla).